We begin with the raw amino-acid sequence, 340 residues long: Phosphate acyltransferase (340 aa).

Residues 285-340 (WRQSGRPARHRGQEPRRHRQPRFWLCHRRGRRRSPRQRNRTHPGTGQPPAGCAGAR) are disordered. Residues 300–325 (RRHRQPRFWLCHRRGRRRSPRQRNRT) show a composition bias toward basic residues.

It belongs to the PlsX family. Homodimer. Probably interacts with PlsY.

It is found in the cytoplasm. It carries out the reaction a fatty acyl-[ACP] + phosphate = an acyl phosphate + holo-[ACP]. It functions in the pathway lipid metabolism; phospholipid metabolism. In terms of biological role, catalyzes the reversible formation of acyl-phosphate (acyl-PO(4)) from acyl-[acyl-carrier-protein] (acyl-ACP). This enzyme utilizes acyl-ACP as fatty acyl donor, but not acyl-CoA. The chain is Phosphate acyltransferase from Laribacter hongkongensis (strain HLHK9).